Reading from the N-terminus, the 359-residue chain is Dual-specificity RNA methyltransferase RlmN (359 aa).

Residue Glu-86 is the Proton acceptor of the active site. The Radical SAM core domain maps to 105 to 338; that stretch reads EGEKYTICVS…CTIRESKGID (234 aa). An intrachain disulfide couples Cys-112 to Cys-343. Positions 119, 123, and 126 each coordinate [4Fe-4S] cluster. S-adenosyl-L-methionine-binding positions include 169–170, Ser-201, 224–226, and Asn-300; these read GE and SLH. Cys-343 functions as the S-methylcysteine intermediate in the catalytic mechanism.

The protein belongs to the radical SAM superfamily. RlmN family. [4Fe-4S] cluster is required as a cofactor.

Its subcellular location is the cytoplasm. It catalyses the reaction adenosine(2503) in 23S rRNA + 2 reduced [2Fe-2S]-[ferredoxin] + 2 S-adenosyl-L-methionine = 2-methyladenosine(2503) in 23S rRNA + 5'-deoxyadenosine + L-methionine + 2 oxidized [2Fe-2S]-[ferredoxin] + S-adenosyl-L-homocysteine. It carries out the reaction adenosine(37) in tRNA + 2 reduced [2Fe-2S]-[ferredoxin] + 2 S-adenosyl-L-methionine = 2-methyladenosine(37) in tRNA + 5'-deoxyadenosine + L-methionine + 2 oxidized [2Fe-2S]-[ferredoxin] + S-adenosyl-L-homocysteine. In terms of biological role, specifically methylates position 2 of adenine 2503 in 23S rRNA and position 2 of adenine 37 in tRNAs. m2A2503 modification seems to play a crucial role in the proofreading step occurring at the peptidyl transferase center and thus would serve to optimize ribosomal fidelity. The sequence is that of Dual-specificity RNA methyltransferase RlmN from Wolinella succinogenes (strain ATCC 29543 / DSM 1740 / CCUG 13145 / JCM 31913 / LMG 7466 / NCTC 11488 / FDC 602W) (Vibrio succinogenes).